Reading from the N-terminus, the 41-residue chain is uncharacterized protein (41 aa).

This is an uncharacterized protein from Saccharomyces cerevisiae (strain ATCC 204508 / S288c) (Baker's yeast).